The sequence spans 492 residues: Ketol-acid reductoisomerase (NADP(+)) (492 aa).

Positions 14-208 (LDQLGRCRFM…GGHKAGVLES (195 aa)) constitute a KARI N-terminal Rossmann domain. NADP(+) contacts are provided by residues 45-48 (CGAQ), Arg68, Arg76, Ser78, and 108-110 (DKQ). His132 is a catalytic residue. Gly158 serves as a coordination point for NADP(+). KARI C-terminal knotted domains follow at residues 209 to 344 (SFVA…NAPK) and 345 to 485 (YDGK…MTDM). Positions 217, 221, 389, and 393 each coordinate Mg(2+). Ser414 provides a ligand contact to substrate.

It belongs to the ketol-acid reductoisomerase family. It depends on Mg(2+) as a cofactor.

The enzyme catalyses (2R)-2,3-dihydroxy-3-methylbutanoate + NADP(+) = (2S)-2-acetolactate + NADPH + H(+). The catalysed reaction is (2R,3R)-2,3-dihydroxy-3-methylpentanoate + NADP(+) = (S)-2-ethyl-2-hydroxy-3-oxobutanoate + NADPH + H(+). It participates in amino-acid biosynthesis; L-isoleucine biosynthesis; L-isoleucine from 2-oxobutanoate: step 2/4. The protein operates within amino-acid biosynthesis; L-valine biosynthesis; L-valine from pyruvate: step 2/4. Functionally, involved in the biosynthesis of branched-chain amino acids (BCAA). Catalyzes an alkyl-migration followed by a ketol-acid reduction of (S)-2-acetolactate (S2AL) to yield (R)-2,3-dihydroxy-isovalerate. In the isomerase reaction, S2AL is rearranged via a Mg-dependent methyl migration to produce 3-hydroxy-3-methyl-2-ketobutyrate (HMKB). In the reductase reaction, this 2-ketoacid undergoes a metal-dependent reduction by NADPH to yield (R)-2,3-dihydroxy-isovalerate. This Haemophilus influenzae (strain 86-028NP) protein is Ketol-acid reductoisomerase (NADP(+)).